Reading from the N-terminus, the 150-residue chain is Large ribosomal subunit protein uL11 (150 aa).

This sequence belongs to the universal ribosomal protein uL11 family. As to quaternary structure, part of the ribosomal stalk of the 50S ribosomal subunit. Interacts with L10 and the large rRNA to form the base of the stalk. L10 forms an elongated spine to which L12 dimers bind in a sequential fashion forming a multimeric L10(L12)X complex. Post-translationally, one or more lysine residues are methylated.

Its function is as follows. Forms part of the ribosomal stalk which helps the ribosome interact with GTP-bound translation factors. The chain is Large ribosomal subunit protein uL11 from Jannaschia sp. (strain CCS1).